We begin with the raw amino-acid sequence, 440 residues long: MSEFSQTVPELVAWARKNDFSISLPVDRLSFLLAVATLNGERLDGEMSEGELVDAFRHVSDAFEQTSETIGVRANNAINDMVRQRLLNRFTSEQAEGNAIYRLTPLGIGITDYYIRQREFSTLRLSMQLSIVAGELKRAADAADEGGDEFHWHRNVYAPLKYSVAEIFDSIDLTQRIMDEQQQQVKDDIAQLLNKDWRAAISSCELLLSETSGTLRELQDTLEAAGDKLQANLLRIQDATMAHDDLHFVDRLVFDLQSKLDRIISWGQQSIDLWIGYDRHVHKFIRTAIDMDKNRVFAQRLRQSIQGYFDEPWALTYANADRLLDMRDEEMALRDEEVTGELPPDLEYEEFNEIREQLAAIIEEQLAIYKSRQAPLDLGLVVREYLAQYPRARHFDVARIVIDQAVRLGVAQADFTGLPAKWQPINDYGAKVQAHVIDKY.

Positions 208–236 are leucine-zipper; sequence LSETSGTLRELQDTLEAAGDKLQANLLRI.

Belongs to the MukF family. Interacts, and probably forms a ternary complex, with MukE and MukB via its C-terminal region. The complex formation is stimulated by calcium or magnesium. It is required for an interaction between MukE and MukB.

Its subcellular location is the cytoplasm. The protein localises to the nucleoid. Involved in chromosome condensation, segregation and cell cycle progression. May participate in facilitating chromosome segregation by condensation DNA from both sides of a centrally located replisome during cell division. Not required for mini-F plasmid partitioning. Probably acts via its interaction with MukB and MukE. Overexpression results in anucleate cells. It has a calcium binding activity. This Citrobacter koseri (strain ATCC BAA-895 / CDC 4225-83 / SGSC4696) protein is Chromosome partition protein MukF.